The sequence spans 543 residues: Cytochrome P450 52A1 (543 aa).

The Lumenal portion of the chain corresponds to 1 to 28 (MSSSPSIAQEFLATITPYVEYCQENYTK). The helical transmembrane segment at 29-48 (WYYFIPLVILSLNLISMLHT) threads the bilayer. At 49-543 (KYLERKFKAK…GAEVQMYLIL (495 aa)) the chain is on the cytoplasmic side. Residue Cys487 participates in heme binding.

It belongs to the cytochrome P450 family. Requires heme as cofactor.

The protein localises to the endoplasmic reticulum membrane. In terms of biological role, together with an NADPH cytochrome P450 the enzyme system catalyzes the terminal hydroxylation as the first step in the assimilation of alkanes and fatty acids. The protein is Cytochrome P450 52A1 (CYP52A1) of Candida tropicalis (Yeast).